We begin with the raw amino-acid sequence, 256 residues long: MDVDPVNSEMELDNKPTCETVPGLPQKKHYRQRAHSNPHSDHDIEYPLTPDHMDWSKQYGDYAAGRQVEFADIGCGYGGLLMRLSPMFPETLMIGMEIRVKVSDYVNEKIQALRKHHEGAGHYRNIAVLRSNAMKYMPNYFRKGQLSKMFFLFPDPHFKNKKHKWRIITPTLVSEYAYVLREQGLIYTITDVKDLHDWMVKHLNEHPLFERLSDDEMKADPVVAMLYESTEEGQKVTRNDGEKWPAVFRRLPNPPL.

The tract at residues 1–43 (MDVDPVNSEMELDNKPTCETVPGLPQKKHYRQRAHSNPHSDHD) is disordered. Basic residues predominate over residues 26 to 36 (QKKHYRQRAHS). Residues Gly74, 97–98 (EI), 132–133 (NA), and Leu152 each bind S-adenosyl-L-methionine. Asp155 is an active-site residue. Residue 230–232 (TEE) participates in S-adenosyl-L-methionine binding.

It belongs to the class I-like SAM-binding methyltransferase superfamily. TrmB family.

The protein localises to the nucleus. The catalysed reaction is guanosine(46) in tRNA + S-adenosyl-L-methionine = N(7)-methylguanosine(46) in tRNA + S-adenosyl-L-homocysteine. It participates in tRNA modification; N(7)-methylguanine-tRNA biosynthesis. Its function is as follows. Catalyzes the formation of N(7)-methylguanine at position 46 (m7G46) in tRNA. This is tRNA (guanine-N(7)-)-methyltransferase from Caenorhabditis briggsae.